The sequence spans 284 residues: Type II methyltransferase M1.LlaDCHI (284 aa).

The S-adenosyl-L-methionine site is built by Trp-17, Lys-21, Asp-62, and Asp-194.

It belongs to the N(4)/N(6)-methyltransferase family.

It catalyses the reaction a 2'-deoxyadenosine in DNA + S-adenosyl-L-methionine = an N(6)-methyl-2'-deoxyadenosine in DNA + S-adenosyl-L-homocysteine + H(+). Functionally, an alpha subtype methylase, recognizes the double-stranded sequence 5'-GATC-3', methylates A-2 on both strands, and protects the DNA from cleavage by the LlaDCHI endonuclease. This chain is Type II methyltransferase M1.LlaDCHI, found in Lactococcus lactis subsp. cremoris (Streptococcus cremoris).